The chain runs to 406 residues: Arginine deiminase (406 aa).

Cys-396 functions as the Amidino-cysteine intermediate in the catalytic mechanism.

The protein belongs to the arginine deiminase family.

It is found in the cytoplasm. It catalyses the reaction L-arginine + H2O = L-citrulline + NH4(+). Its pathway is amino-acid degradation; L-arginine degradation via ADI pathway; carbamoyl phosphate from L-arginine: step 1/2. In Vibrio campbellii (strain ATCC BAA-1116), this protein is Arginine deiminase.